The following is a 332-amino-acid chain: Phosphoribosylformylglycinamidine cyclo-ligase (332 aa).

Belongs to the AIR synthase family.

The protein localises to the cytoplasm. The enzyme catalyses 2-formamido-N(1)-(5-O-phospho-beta-D-ribosyl)acetamidine + ATP = 5-amino-1-(5-phospho-beta-D-ribosyl)imidazole + ADP + phosphate + H(+). It participates in purine metabolism; IMP biosynthesis via de novo pathway; 5-amino-1-(5-phospho-D-ribosyl)imidazole from N(2)-formyl-N(1)-(5-phospho-D-ribosyl)glycinamide: step 2/2. The sequence is that of Phosphoribosylformylglycinamidine cyclo-ligase from Clostridium acetobutylicum (strain ATCC 824 / DSM 792 / JCM 1419 / IAM 19013 / LMG 5710 / NBRC 13948 / NRRL B-527 / VKM B-1787 / 2291 / W).